Reading from the N-terminus, the 192-residue chain is MGQIEWAMWANEQALASGLILITGGIVATAGRFTQWYFGAYSIVAGVLICLLEYPRGKRKKGSTMERCGQKYLTAVVKLFGPLTRNYYVRAVLHLLLSVPAGFLLATILGTVCLAIASVIYLLAAIRGEQWTPIEPKPKERPQVGGTIKQPPTNPPPRPPAEVRKKPSEAEEEAASAGGPQVNPIPVTDEVV.

Residues 2-7 (GQIEWA) lie on the Cytoplasmic side of the membrane. The helical transmembrane segment at 8–30 (MWANEQALASGLILITGGIVATA) threads the bilayer. At 31 to 35 (GRFTQ) the chain is on the extracellular side. Residues 36–53 (WYFGAYSIVAGVLICLLE) form a helical membrane-spanning segment. The Cytoplasmic segment spans residues 54 to 69 (YPRGKRKKGSTMERCG). The stretch at 70 to 80 (QKYLTAVVKLF) is an intramembrane region. Residues 81-86 (GPLTRN) are Cytoplasmic-facing. Residues 87–104 (YYVRAVLHLLLSVPAGFL) traverse the membrane as a helical segment. Residue L105 is a topological domain, extracellular. Residues 106-126 (ATILGTVCLAIASVIYLLAAI) traverse the membrane as a helical segment. Residues 127–192 (RGEQWTPIEP…NPIPVTDEVV (66 aa)) are Cytoplasmic-facing. The disordered stretch occupies residues 134-192 (IEPKPKERPQVGGTIKQPPTNPPPRPPAEVRKKPSEAEEEAASAGGPQVNPIPVTDEVV). Position 147 is a phosphothreonine (T147). Residue K149 forms a Glycyl lysine isopeptide (Lys-Gly) (interchain with G-Cter in ubiquitin) linkage. Phosphoserine occurs at positions 168 and 176.

Belongs to the p22phox family. In terms of assembly, component of the phagocyte NADPH oxidase core complex/cytochrome b558 complex, composed of CYBB (heavy chain (beta)) and CYBA (light chain (alpha)). Component of the phagocyte NADPH oxidase complex composed of an obligatory core heterodimer formed by the membrane proteins CYBA and CYBB and the cytosolic regulatory subunits NCF1/p47-phox, NCF2/p67-phox, NCF4/p40-phox and the small GTPase RAC1 or RAC2. Interacts with NCF1 (via SH3 domain). Interacts with SH3PXD2A. Interacts with DUOX1, DUOX2 and TPO. Interacts with NOX4; this interaction mediates superoxide generation. Interacts with calprotectin (S100A8/9). Interacts with GBP7. Interacts with NOXO1. Forms a heterodimer with NOX3 and is essential for activity and cell membrane localization of NOX3. Interacts with NOX1. In terms of processing, phosphorylation at Thr-147 enhances NADPH oxidase activity by promoting NCF1/p47-phox binding. Post-translationally, ubiquitinated at Lys-149 likely by RNF145. Expressed to a relatively high level in kidney, spleen, thymus and lung, and to a lower level in aorta, adrenals, and heart. Expression is not detected in liver or brain.

The protein resides in the cell membrane. Subunit of NADPH oxidase complexes that is required for the NADPH oxidase activity that generates, in various cell types, superoxide from molecular oxygen utilizing NADPH as an electron donor. Subunit of the phagocyte NADPH oxidase complex that mediates the transfer of electrons from cytosolic NADPH to O2 to produce the superoxide anion (O2(-)). In the activated complex, electrons are first transferred from NADPH to flavin adenine dinucleotide (FAD) and subsequently transferred via two heme molecules to molecular oxygen, producing superoxide through an outer-sphere reaction. Activation of the NADPH oxidase complex is initiated by the assembly of cytosolic subunits of the NADPH oxidase complex with the core NADPH oxidase complex to form a complex at the plasma membrane or phagosomal membrane. This activation process is initiated by phosphorylation dependent binding of the cytosolic NCF1/p47-phox subunit to the C-terminus of CYBA/p22-phox. Aassociates with NOX3 to form a functional NADPH oxidase constitutively generating superoxide. The chain is Cytochrome b-245 light chain from Rattus norvegicus (Rat).